The primary structure comprises 477 residues: MVDKTHETEFSKKQLEASSSGHGGVLIDAEENGIHDQAEQRSCLICGDRATGLHYGIISCEGCKGFFKRSICNKRVYRCSRDKNCEMSRKQRNRCQYCRLLKCLQMGMNRKAIREDGMPGGRNKSIGPVQISDEEIERIMSGQEFKDEANMPEHTWGNNGDSDHSSPGNGVSDGNQPSPVSTLSSNRSVELNGYTTALREQYIGNAMAQHYQFLPHLFGYAAQPRSLYPQSHTLIGQLVAAEDLAPLGTPMLIEDGYRVTQVELFALLCRLADELLFRQISWIKKLPFFCDLSIEDYTRLLSATWQELILLACLTVYSAQVLGDLANVTHKYTPSDDELHSFSEDGMEVMEKLIYLFRKFHQLKVSNEEYACMKAINFLNQDIRGLTNVTQLEQLNKRYWYVCQDYTEYKYPHQPKRFPEIMMCLPEIRCIAGKLVNIPLEQLPLLFKAVLHSCKSSLSSYRTSSSPCVTKGTAPAN.

The segment at residues 40 to 115 (QRSCLICGDR…MGMNRKAIRE (76 aa)) is a DNA-binding region (nuclear receptor). 2 NR C4-type zinc fingers span residues 43–63 (CLIC…CEGC) and 79–98 (CSRD…CQYC). Residues 147–187 (DEANMPEHTWGNNGDSDHSSPGNGVSDGNQPSPVSTLSSNR) are disordered. The segment covering 156-187 (WGNNGDSDHSSPGNGVSDGNQPSPVSTLSSNR) has biased composition (polar residues). The NR LBD domain occupies 230–461 (QSHTLIGQLV…HSCKSSLSSY (232 aa)).

This sequence belongs to the nuclear hormone receptor family. NR6 subfamily. Homodimer. As to expression, expressed in germ cells, being predominant in previtellogenic oocytes in the ovary and in spermatocytes in the testis.

It is found in the nucleus. In terms of biological role, probable orphan nuclear receptor. Binds to a response element containing repeats of the motif 5'-AGGTCA-3'. This is Nuclear receptor subfamily 6 group A member 1-A from Danio rerio (Zebrafish).